We begin with the raw amino-acid sequence, 314 residues long: Hydroxyacyl-coenzyme A dehydrogenase, mitochondrial (314 aa).

The transit peptide at 1-12 directs the protein to the mitochondrion; that stretch reads MAFVTRQFLRSM. NAD(+) is bound by residues 34–39 and Asp57; that span reads GGGLMG. Residue Ser73 participates in CoA binding. Residue Lys75 is modified to N6-acetyllysine. Lys80 provides a ligand contact to CoA. Lys80 bears the N6-succinyllysine mark. N6-acetyllysine; alternate occurs at positions 81 and 87. 2 positions are modified to N6-succinyllysine; alternate: Lys81 and Lys87. An NAD(+)-binding site is contributed by Glu122. Residue Lys125 is modified to N6-acetyllysine. Lys127 contributes to the NAD(+) binding site. N6-(2-hydroxyisobutyryl)lysine is present on Lys127. Lys136 carries the post-translational modification N6-acetyllysine; alternate. An N6-succinyllysine; alternate modification is found at Lys136. Residues Ser149 and Asn173 each coordinate NAD(+). Ser149 contacts CoA. Position 179 is an N6-acetyllysine (Lys179). Lys185, Lys192, and Lys202 each carry N6-acetyllysine; alternate. Residues Lys185, Lys192, and Lys202 each carry the N6-succinyllysine; alternate modification. An N6-succinyllysine modification is found at Lys206. Lys212 and Lys241 each carry N6-acetyllysine; alternate. Lys212 and Lys241 each carry N6-succinyllysine; alternate. An NAD(+)-binding site is contributed by Lys305. Lys312 is subject to N6-acetyllysine; alternate. N6-succinyllysine; alternate is present on Lys312.

This sequence belongs to the 3-hydroxyacyl-CoA dehydrogenase family. Homodimer. Interacts with GLUD1; this interaction inhibits the activation of glutamate dehydrogenase 1 (GLUD1). Succinylation at Lys-81, adjacent to a coenzyme A binding site. Desuccinylated by SIRT5. Expressed in liver, kidney, brain, and pancreatic islets.

The protein resides in the mitochondrion matrix. Its subcellular location is the nucleus. The protein localises to the cytoplasm. It localises to the cytosol. It catalyses the reaction a (3S)-3-hydroxyacyl-CoA + NAD(+) = a 3-oxoacyl-CoA + NADH + H(+). The catalysed reaction is (3S)-3-hydroxybutanoyl-CoA + NAD(+) = acetoacetyl-CoA + NADH + H(+). The enzyme catalyses (3S)-hydroxydecanoyl-CoA + NAD(+) = 3-oxodecanoyl-CoA + NADH + H(+). It carries out the reaction (3S)-hydroxyhexadecanoyl-CoA + NAD(+) = 3-oxohexadecanoyl-CoA + NADH + H(+). It functions in the pathway lipid metabolism; fatty acid beta-oxidation. In terms of biological role, mitochondrial fatty acid beta-oxidation enzyme that catalyzes the third step of the beta-oxidation cycle for medium and short-chain 3-hydroxy fatty acyl-CoAs (C4 to C10). Plays a role in the control of insulin secretion by inhibiting the activation of glutamate dehydrogenase 1 (GLUD1), an enzyme that has an important role in regulating amino acid-induced insulin secretion. Plays a role in the maintenance of normal spermatogenesis through the reduction of fatty acid accumulation in the testes. Its function is as follows. Inhibits cell proliferation. This chain is Hydroxyacyl-coenzyme A dehydrogenase, mitochondrial (Hadh), found in Mus musculus (Mouse).